Reading from the N-terminus, the 219-residue chain is Cytidylate kinase (219 aa).

15–23 (GPAASGKGT) contacts ATP.

Belongs to the cytidylate kinase family. Type 1 subfamily.

It localises to the cytoplasm. It carries out the reaction CMP + ATP = CDP + ADP. The enzyme catalyses dCMP + ATP = dCDP + ADP. This Brucella melitensis biotype 2 (strain ATCC 23457) protein is Cytidylate kinase.